The primary structure comprises 273 residues: HMP-PP phosphatase (273 aa).

The Nucleophile role is filled by aspartate 8. Mg(2+) is bound by residues aspartate 8, aspartate 10, and aspartate 212.

Belongs to the HAD-like hydrolase superfamily. Cof family. Requires Mg(2+) as cofactor.

It catalyses the reaction 4-amino-2-methyl-5-(diphosphooxymethyl)pyrimidine + H2O = 4-amino-2-methyl-5-(phosphooxymethyl)pyrimidine + phosphate + H(+). Catalyzes the hydrolysis of 4-amino-2-methyl-5-hydroxymethylpyrimidine pyrophosphate (HMP-PP) to 4-amino-2-methyl-5-hydroxymethylpyrimidine phosphate (HMP-P). The protein is HMP-PP phosphatase of Yersinia enterocolitica serotype O:8 / biotype 1B (strain NCTC 13174 / 8081).